Here is a 204-residue protein sequence, read N- to C-terminus: Somatotropin (204 aa).

Residues 1-17 (MNSVVLLLSVVCLGVSS) form the signal peptide. Pyrrolidone carboxylic acid is present on Q18. Position 36 (H36) interacts with Zn(2+). A disulfide bridge connects residues C69 and C177. Zn(2+) is bound at residue E186. Residues C194 and C202 are joined by a disulfide bond.

Belongs to the somatotropin/prolactin family.

It localises to the secreted. Its function is as follows. Growth hormone plays an important role in growth control and involved in the regulation of several anabolic processes. The protein is Somatotropin (gh) of Oreochromis niloticus (Nile tilapia).